We begin with the raw amino-acid sequence, 364 residues long: Aminomethyltransferase (364 aa).

The protein belongs to the GcvT family. As to quaternary structure, the glycine cleavage system is composed of four proteins: P, T, L and H.

It carries out the reaction N(6)-[(R)-S(8)-aminomethyldihydrolipoyl]-L-lysyl-[protein] + (6S)-5,6,7,8-tetrahydrofolate = N(6)-[(R)-dihydrolipoyl]-L-lysyl-[protein] + (6R)-5,10-methylene-5,6,7,8-tetrahydrofolate + NH4(+). Its function is as follows. The glycine cleavage system catalyzes the degradation of glycine. The polypeptide is Aminomethyltransferase (Shewanella baltica (strain OS223)).